The following is a 589-amino-acid chain: Probable arginine--tRNA ligase, cytoplasmic (589 aa).

Residues 121-123 (SPN), histidine 132, tyrosine 332, aspartate 336, and glutamine 360 contribute to the L-arginine site. The short motif at 121-132 (SPNIAKPFHAGH) is the 'HIGH' region element. Positions 469 to 483 (DTGPYLQYAHARLCS) are interaction with tRNA.

Belongs to the class-I aminoacyl-tRNA synthetase family.

Its subcellular location is the cytoplasm. The protein resides in the cytosol. It carries out the reaction tRNA(Arg) + L-arginine + ATP = L-arginyl-tRNA(Arg) + AMP + diphosphate. Its function is as follows. Forms part of a macromolecular complex that catalyzes the attachment of specific amino acids to cognate tRNAs during protein synthesis. This is Probable arginine--tRNA ligase, cytoplasmic (argS1) from Dictyostelium discoideum (Social amoeba).